Reading from the N-terminus, the 433-residue chain is Ribosomal protein uS12 methylthiotransferase RimO (433 aa).

The MTTase N-terminal domain maps to 9–124; that stretch reads NKINVITLGC…LLKALGADYR (116 aa). Cys-18, Cys-53, Cys-87, Cys-148, Cys-152, and Cys-155 together coordinate [4Fe-4S] cluster. Residues 134-364 enclose the Radical SAM core domain; it reads TTPKNYAYLK…MDLQSQISWD (231 aa). In terms of domain architecture, TRAM spans 367–433; it reads QEKLGQTFRC…TEFDLYGEPA (67 aa).

Belongs to the methylthiotransferase family. RimO subfamily. It depends on [4Fe-4S] cluster as a cofactor.

The protein resides in the cytoplasm. The enzyme catalyses L-aspartate(89)-[ribosomal protein uS12]-hydrogen + (sulfur carrier)-SH + AH2 + 2 S-adenosyl-L-methionine = 3-methylsulfanyl-L-aspartate(89)-[ribosomal protein uS12]-hydrogen + (sulfur carrier)-H + 5'-deoxyadenosine + L-methionine + A + S-adenosyl-L-homocysteine + 2 H(+). Its function is as follows. Catalyzes the methylthiolation of an aspartic acid residue of ribosomal protein uS12. This chain is Ribosomal protein uS12 methylthiotransferase RimO, found in Flavobacterium psychrophilum (strain ATCC 49511 / DSM 21280 / CIP 103535 / JIP02/86).